The primary structure comprises 101 residues: Putative UPF0377 protein YBL108W (101 aa).

Belongs to the UPF0377 family.

The chain is Putative UPF0377 protein YBL108W from Saccharomyces cerevisiae (strain ATCC 204508 / S288c) (Baker's yeast).